The sequence spans 277 residues: Phosphonates import ATP-binding protein PhnC 2 (277 aa).

An ABC transporter domain is found at 5 to 253 (IHVQGLNKTF…FLNDLYGADA (249 aa)). Position 37–44 (37–44 (GASGSGKS)) interacts with ATP.

Belongs to the ABC transporter superfamily. Phosphonates importer (TC 3.A.1.9.1) family. The complex is composed of two ATP-binding proteins (PhnC), two transmembrane proteins (PhnE) and a solute-binding protein (PhnD).

It is found in the cell inner membrane. It catalyses the reaction phosphonate(out) + ATP + H2O = phosphonate(in) + ADP + phosphate + H(+). In terms of biological role, part of the ABC transporter complex PhnCDE involved in phosphonates import. Responsible for energy coupling to the transport system. The chain is Phosphonates import ATP-binding protein PhnC 2 from Pseudomonas savastanoi pv. phaseolicola (strain 1448A / Race 6) (Pseudomonas syringae pv. phaseolicola (strain 1448A / Race 6)).